Here is a 143-residue protein sequence, read N- to C-terminus: Large ribosomal subunit protein uL11 (143 aa).

The protein belongs to the universal ribosomal protein uL11 family. As to quaternary structure, part of the ribosomal stalk of the 50S ribosomal subunit. Interacts with L10 and the large rRNA to form the base of the stalk. L10 forms an elongated spine to which L12 dimers bind in a sequential fashion forming a multimeric L10(L12)X complex. One or more lysine residues are methylated.

In terms of biological role, forms part of the ribosomal stalk which helps the ribosome interact with GTP-bound translation factors. The sequence is that of Large ribosomal subunit protein uL11 from Variovorax paradoxus (strain S110).